The following is a 32-amino-acid chain: Unknown protein from spot 206 of 2D-PAGE of etiolated coleoptile (32 aa).

In Zea mays (Maize), this protein is Unknown protein from spot 206 of 2D-PAGE of etiolated coleoptile.